Reading from the N-terminus, the 946-residue chain is Bifunctional glutamine synthetase adenylyltransferase/adenylyl-removing enzyme (946 aa).

An adenylyl removase region spans residues 1-440 (MKPLSSPLQQ…VFNELIGDDE (440 aa)). Residues 449-946 (SEQWRELWQD…ASWQKWLVEE (498 aa)) are adenylyl transferase.

It belongs to the GlnE family. Mg(2+) serves as cofactor.

It carries out the reaction [glutamine synthetase]-O(4)-(5'-adenylyl)-L-tyrosine + phosphate = [glutamine synthetase]-L-tyrosine + ADP. The enzyme catalyses [glutamine synthetase]-L-tyrosine + ATP = [glutamine synthetase]-O(4)-(5'-adenylyl)-L-tyrosine + diphosphate. Its function is as follows. Involved in the regulation of glutamine synthetase GlnA, a key enzyme in the process to assimilate ammonia. When cellular nitrogen levels are high, the C-terminal adenylyl transferase (AT) inactivates GlnA by covalent transfer of an adenylyl group from ATP to specific tyrosine residue of GlnA, thus reducing its activity. Conversely, when nitrogen levels are low, the N-terminal adenylyl removase (AR) activates GlnA by removing the adenylyl group by phosphorolysis, increasing its activity. The regulatory region of GlnE binds the signal transduction protein PII (GlnB) which indicates the nitrogen status of the cell. In Escherichia coli O45:K1 (strain S88 / ExPEC), this protein is Bifunctional glutamine synthetase adenylyltransferase/adenylyl-removing enzyme.